The following is a 147-amino-acid chain: Large ribosomal subunit protein bL9 (147 aa).

This sequence belongs to the bacterial ribosomal protein bL9 family.

Binds to the 23S rRNA. The chain is Large ribosomal subunit protein bL9 from Thermoanaerobacter pseudethanolicus (strain ATCC 33223 / 39E) (Clostridium thermohydrosulfuricum).